Reading from the N-terminus, the 542-residue chain is CTP synthase (542 aa).

The amidoligase domain stretch occupies residues 1–265 (MARYVFITGG…DSEVLAAFGI (265 aa)). Serine 13 lines the CTP pocket. Residue serine 13 participates in UTP binding. 14–19 (SLGKGI) provides a ligand contact to ATP. Residue tyrosine 54 coordinates L-glutamine. Aspartate 71 provides a ligand contact to ATP. Mg(2+) contacts are provided by aspartate 71 and glutamate 139. Residues 146–148 (DIE), 186–191 (KTKPTQ), and lysine 222 each bind CTP. UTP contacts are provided by residues 186–191 (KTKPTQ) and lysine 222. Residues 291 to 541 (TIAIVGKYTG…IAAAVEQSRL (251 aa)) enclose the Glutamine amidotransferase type-1 domain. Glycine 353 provides a ligand contact to L-glutamine. Cysteine 380 serves as the catalytic Nucleophile; for glutamine hydrolysis. L-glutamine contacts are provided by residues 381–384 (FGMQ), glutamate 404, and arginine 469. Catalysis depends on residues histidine 514 and glutamate 516.

The protein belongs to the CTP synthase family. As to quaternary structure, homotetramer.

It catalyses the reaction UTP + L-glutamine + ATP + H2O = CTP + L-glutamate + ADP + phosphate + 2 H(+). The catalysed reaction is L-glutamine + H2O = L-glutamate + NH4(+). It carries out the reaction UTP + NH4(+) + ATP = CTP + ADP + phosphate + 2 H(+). It participates in pyrimidine metabolism; CTP biosynthesis via de novo pathway; CTP from UDP: step 2/2. Allosterically activated by GTP, when glutamine is the substrate; GTP has no effect on the reaction when ammonia is the substrate. The allosteric effector GTP functions by stabilizing the protein conformation that binds the tetrahedral intermediate(s) formed during glutamine hydrolysis. Inhibited by the product CTP, via allosteric rather than competitive inhibition. Catalyzes the ATP-dependent amination of UTP to CTP with either L-glutamine or ammonia as the source of nitrogen. Regulates intracellular CTP levels through interactions with the four ribonucleotide triphosphates. This is CTP synthase from Chelativorans sp. (strain BNC1).